The chain runs to 186 residues: Translation initiation factor IF-3 (186 aa).

It belongs to the IF-3 family. Monomer.

The protein localises to the cytoplasm. Functionally, IF-3 binds to the 30S ribosomal subunit and shifts the equilibrium between 70S ribosomes and their 50S and 30S subunits in favor of the free subunits, thus enhancing the availability of 30S subunits on which protein synthesis initiation begins. The protein is Translation initiation factor IF-3 of Borreliella burgdorferi (strain ATCC 35210 / DSM 4680 / CIP 102532 / B31) (Borrelia burgdorferi).